The following is a 684-amino-acid chain: UvrABC system protein B (684 aa).

Positions Asp32–Arg420 constitute a Helicase ATP-binding domain. Gly45 to Thr52 is an ATP binding site. Positions Tyr98–Ile121 match the Beta-hairpin motif. One can recognise a Helicase C-terminal domain in the interval Gln437–Leu603. The region spanning Met643–Arg678 is the UVR domain.

The protein belongs to the UvrB family. Forms a heterotetramer with UvrA during the search for lesions. Interacts with UvrC in an incision complex.

The protein resides in the cytoplasm. In terms of biological role, the UvrABC repair system catalyzes the recognition and processing of DNA lesions. A damage recognition complex composed of 2 UvrA and 2 UvrB subunits scans DNA for abnormalities. Upon binding of the UvrA(2)B(2) complex to a putative damaged site, the DNA wraps around one UvrB monomer. DNA wrap is dependent on ATP binding by UvrB and probably causes local melting of the DNA helix, facilitating insertion of UvrB beta-hairpin between the DNA strands. Then UvrB probes one DNA strand for the presence of a lesion. If a lesion is found the UvrA subunits dissociate and the UvrB-DNA preincision complex is formed. This complex is subsequently bound by UvrC and the second UvrB is released. If no lesion is found, the DNA wraps around the other UvrB subunit that will check the other stand for damage. The chain is UvrABC system protein B from Chlorobaculum tepidum (strain ATCC 49652 / DSM 12025 / NBRC 103806 / TLS) (Chlorobium tepidum).